Reading from the N-terminus, the 158-residue chain is NAD(P)H-quinone oxidoreductase subunit J, chloroplastic (158 aa).

It belongs to the complex I 30 kDa subunit family. In terms of assembly, NDH is composed of at least 16 different subunits, 5 of which are encoded in the nucleus.

The protein resides in the plastid. The protein localises to the chloroplast thylakoid membrane. The catalysed reaction is a plastoquinone + NADH + (n+1) H(+)(in) = a plastoquinol + NAD(+) + n H(+)(out). It catalyses the reaction a plastoquinone + NADPH + (n+1) H(+)(in) = a plastoquinol + NADP(+) + n H(+)(out). NDH shuttles electrons from NAD(P)H:plastoquinone, via FMN and iron-sulfur (Fe-S) centers, to quinones in the photosynthetic chain and possibly in a chloroplast respiratory chain. The immediate electron acceptor for the enzyme in this species is believed to be plastoquinone. Couples the redox reaction to proton translocation, and thus conserves the redox energy in a proton gradient. This Nandina domestica (Heavenly bamboo) protein is NAD(P)H-quinone oxidoreductase subunit J, chloroplastic.